The primary structure comprises 124 residues: Peptidyl-tRNA hydrolase (124 aa).

It belongs to the PTH2 family.

It is found in the cytoplasm. It carries out the reaction an N-acyl-L-alpha-aminoacyl-tRNA + H2O = an N-acyl-L-amino acid + a tRNA + H(+). In terms of biological role, the natural substrate for this enzyme may be peptidyl-tRNAs which drop off the ribosome during protein synthesis. The sequence is that of Peptidyl-tRNA hydrolase from Aeropyrum pernix (strain ATCC 700893 / DSM 11879 / JCM 9820 / NBRC 100138 / K1).